Reading from the N-terminus, the 160-residue chain is Transcriptional repressor NrdR (160 aa).

A zinc finger spans residues 3-34 (CPYCQCEDTQVKDSRPAEEGAVIRRRRVCSVC). The ATP-cone domain maps to 49–139 (LLVLKKSGRR…VYRDFRNASD (91 aa)).

This sequence belongs to the NrdR family. It depends on Zn(2+) as a cofactor.

Functionally, negatively regulates transcription of bacterial ribonucleotide reductase nrd genes and operons by binding to NrdR-boxes. The sequence is that of Transcriptional repressor NrdR from Bartonella bacilliformis (strain ATCC 35685 / KC583 / Herrer 020/F12,63).